The following is a 164-amino-acid chain: Cell cycle link protein (164 aa).

Positions 9–22 (LPEELKEKIMNEHL) are binding to host SKP1 protein. The short motif at 111 to 115 (LYCSE) is the LXCXE motif, interaction with host RBR element.

It belongs to the nanovirus Clink protein family. Interacts with host SKP1. Interacts (via LXCXE domain) with host retinoblastoma-related protein 1 (RBR1). Interacts (via LXCXE domain) with retinoblastoma-related proteins (RBR).

Interacts with and disrupts the function of host retinoblastoma-related proteins RBR, which are key regulators of the cell cycle. Induces transcriptional activation of E2F-regulated S-phase and G2/M-phase-specific genes. Inactivation of the ability of RBR to arrest the cell cycle leads to the stimulation of viral DNA replication. This chain is Cell cycle link protein (DNA-C), found in Trifolium subterraneum (Subterranean clover).